The primary structure comprises 162 residues: Protein archease (162 aa).

Positions 34, 161, and 162 each coordinate Ca(2+).

It belongs to the archease family. In terms of assembly, component of the tRNA-splicing ligase complex.

Component of the tRNA-splicing ligase complex required to facilitate the enzymatic turnover of catalytic subunit RTCB. Together with ddx1, acts by facilitating the guanylylation of RTCB, a key intermediate step in tRNA ligation. This chain is Protein archease, found in Ictalurus punctatus (Channel catfish).